The chain runs to 389 residues: Putative 8-amino-7-oxononanoate synthase (389 aa).

R22 serves as a coordination point for substrate. 109–110 (GY) contributes to the pyridoxal 5'-phosphate binding site. H134 is a binding site for substrate. Residues S182, 207 to 210 (DDAH), and 238 to 241 (TLSK) contribute to the pyridoxal 5'-phosphate site. K241 is subject to N6-(pyridoxal phosphate)lysine. T350 is a binding site for substrate.

Belongs to the class-II pyridoxal-phosphate-dependent aminotransferase family. BioF subfamily. In terms of assembly, homodimer. The cofactor is pyridoxal 5'-phosphate.

It catalyses the reaction 6-carboxyhexanoyl-[ACP] + L-alanine + H(+) = (8S)-8-amino-7-oxononanoate + holo-[ACP] + CO2. The protein operates within cofactor biosynthesis; biotin biosynthesis. Catalyzes the decarboxylative condensation of pimeloyl-[acyl-carrier protein] and L-alanine to produce 8-amino-7-oxononanoate (AON), [acyl-carrier protein], and carbon dioxide. The chain is Putative 8-amino-7-oxononanoate synthase (bioF) from Parvibaculum lavamentivorans (strain DS-1 / DSM 13023 / NCIMB 13966).